Here is a 405-residue protein sequence, read N- to C-terminus: Alpha-1-antiproteinase S (405 aa).

A signal peptide spans 1–24 (MPSAIPRGLLLLAGLCCLVFGIMA). Residues asparagine 57, asparagine 94, asparagine 157, and asparagine 258 are each glycosylated (N-linked (GlcNAc...) asparagine). An RCL region spans residues 360–379 (GATMMEFMPMSLPEDLSFNK).

The protein belongs to the serpin family.

The protein resides in the secreted. Functionally, inhibits elastase, chymotrypsin, cathepsin G, plasmin, and trypsin. In Cavia porcellus (Guinea pig), this protein is Alpha-1-antiproteinase S.